A 190-amino-acid polypeptide reads, in one-letter code: MELLKQRILKDGRVIGNDILKVDSFLNHQMDVALFNEMGKEFHKQFAHKNITKILTIEASGIGIACIAAQYFNVPVIFAKKTESRNLDSDAYLSEVFSFTKGKTYTIRVSKNYLNSEDTILIIDDFLANGKAALGLAHIVEQSGAKLGGIGIAVEKGFQDGGKLLREKGFDVKSLAIISSMENGRLSFTE.

Xanthine contacts are provided by Leu-20 and Asn-27. Residue 128-132 (ANGKA) participates in 5-phospho-alpha-D-ribose 1-diphosphate binding. Lys-156 is a binding site for xanthine.

The protein belongs to the purine/pyrimidine phosphoribosyltransferase family. Xpt subfamily. Homodimer.

It is found in the cytoplasm. It catalyses the reaction XMP + diphosphate = xanthine + 5-phospho-alpha-D-ribose 1-diphosphate. Its pathway is purine metabolism; XMP biosynthesis via salvage pathway; XMP from xanthine: step 1/1. Its function is as follows. Converts the preformed base xanthine, a product of nucleic acid breakdown, to xanthosine 5'-monophosphate (XMP), so it can be reused for RNA or DNA synthesis. This Ruminiclostridium cellulolyticum (strain ATCC 35319 / DSM 5812 / JCM 6584 / H10) (Clostridium cellulolyticum) protein is Xanthine phosphoribosyltransferase.